The chain runs to 596 residues: Proline--tRNA ligase (596 aa).

The protein belongs to the class-II aminoacyl-tRNA synthetase family. ProS type 1 subfamily. As to quaternary structure, homodimer.

It localises to the cytoplasm. The catalysed reaction is tRNA(Pro) + L-proline + ATP = L-prolyl-tRNA(Pro) + AMP + diphosphate. Functionally, catalyzes the attachment of proline to tRNA(Pro) in a two-step reaction: proline is first activated by ATP to form Pro-AMP and then transferred to the acceptor end of tRNA(Pro). As ProRS can inadvertently accommodate and process non-cognate amino acids such as alanine and cysteine, to avoid such errors it has two additional distinct editing activities against alanine. One activity is designated as 'pretransfer' editing and involves the tRNA(Pro)-independent hydrolysis of activated Ala-AMP. The other activity is designated 'posttransfer' editing and involves deacylation of mischarged Ala-tRNA(Pro). The misacylated Cys-tRNA(Pro) is not edited by ProRS. This Prochlorococcus marinus (strain NATL2A) protein is Proline--tRNA ligase.